Reading from the N-terminus, the 1201-residue chain is Period circadian protein homolog 3 (1201 aa).

Positions 1-50 (MPRGEAPGPGRRGAKDEALGEESGERWSPEFHLQRKLADSSHSEQQDRNR) are disordered. The segment covering 13–50 (GAKDEALGEESGERWSPEFHLQRKLADSSHSEQQDRNR) has biased composition (basic and acidic residues). Positions 55-64 (LIMVVQEMKK) match the Nuclear export signal 1 motif. PAS domains follow at residues 121-188 (IASE…RAQL) and 262-328 (YEAP…KVLK). In terms of domain architecture, PAC spans 337–380 (HSPIRFCTQNGDYIILDSSWSSFVNPWSRKISFIIGRHKVRTSP). Positions 403–412 (LQEQIYKLLL) match the Nuclear export signal 3 motif. The CSNK1E binding domain stretch occupies residues 555-760 (LKRKCISCTN…SSSNTGSGPR (206 aa)). 2 disordered regions span residues 717 to 788 (YSYF…FPPA) and 881 to 923 (PSMS…RSSS). A compositionally biased stretch (polar residues) spans 721–731 (QGDSTSKQTRS). The Nuclear localization signal signature appears at 729–745 (TRSAGCRKGKHKRKKLP). Over residues 733-743 (GCRKGKHKRKK) the composition is skewed to basic residues. Low complexity-rich tracts occupy residues 767-783 (AQPCCPSAASSPHTSSP) and 881-890 (PSMSSAMSPT). Basic and acidic residues predominate over residues 900 to 911 (QRREEEKWEAQS). Phosphoserine is present on serine 919. Positions 925 to 932 (LQLNLLQE) match the Nuclear export signal 2 motif. The disordered stretch occupies residues 952-1067 (TEYCVTGNNG…GSAASGSSDS (116 aa)). Composition is skewed to polar residues over residues 957–976 (TGNNGSESSPATTGALSTGS), 983–994 (SHPTASALSTGS), 1001–1012 (SHPTASALSTGS), and 1035–1050 (TPSHPTATVLSTGSPP). Repeat copies occupy residues 965-982 (SPATTGALSTGSPPRENP), 983-1000 (SHPTASALSTGSPPMKNP), 1001-1018 (SHPTASALSTGSPPMKNP), 1019-1036 (SHPTASTLSMGLPPSRTP), and 1037-1054 (SHPTATVLSTGSPPSESP). The 5 X 18 AA tandem repeats of S-[HP]-[AP]-T-[AT]-[GST]-[ATV]-L-S-[MT]-G-[LS]-P-P-[MRS]-[EKR]-[NST]-P stretch occupies residues 965 to 1054 (SPATTGALST…STGSPPSESP (90 aa)). A Phosphoserine modification is found at serine 994. Serine 1053 carries the post-translational modification Phosphoserine. Low complexity predominate over residues 1053-1067 (SPSRTGSAASGSSDS). The interval 1123-1201 (ERVKEVVLKE…CGQVLVEDSC (79 aa)) is CRY binding domain.

As to quaternary structure, homodimer. Component of the circadian core oscillator, which includes the CRY proteins, CLOCK or NPAS2, BMAL1 or BMAL2, CSNK1D and/or CSNK1E, TIMELESS and the PER proteins. Interacts directly with PER1, PER2, CRY1, CRY2, and TIMELESS; interaction with CRY1 and CRY2 is weak and not rhythmic. Interacts with FBXW11 and BTRC. In terms of processing, phosphorylation by CSNK1E is weak and appears to require association with PER1 and translocation to the nucleus. Ubiquitinated.

The protein resides in the cytoplasm. It localises to the nucleus. Its function is as follows. Originally described as a core component of the circadian clock. The circadian clock, an internal time-keeping system, regulates various physiological processes through the generation of approximately 24 hour circadian rhythms in gene expression, which are translated into rhythms in metabolism and behavior. It is derived from the Latin roots 'circa' (about) and 'diem' (day) and acts as an important regulator of a wide array of physiological functions including metabolism, sleep, body temperature, blood pressure, endocrine, immune, cardiovascular, and renal function. Consists of two major components: the central clock, residing in the suprachiasmatic nucleus (SCN) of the brain, and the peripheral clocks that are present in nearly every tissue and organ system. Both the central and peripheral clocks can be reset by environmental cues, also known as Zeitgebers (German for 'timegivers'). The predominant Zeitgeber for the central clock is light, which is sensed by retina and signals directly to the SCN. The central clock entrains the peripheral clocks through neuronal and hormonal signals, body temperature and feeding-related cues, aligning all clocks with the external light/dark cycle. Circadian rhythms allow an organism to achieve temporal homeostasis with its environment at the molecular level by regulating gene expression to create a peak of protein expression once every 24 hours to control when a particular physiological process is most active with respect to the solar day. Transcription and translation of core clock components (CLOCK, NPAS2, BMAL1, BMAL2, PER1, PER2, PER3, CRY1 and CRY2) plays a critical role in rhythm generation, whereas delays imposed by post-translational modifications (PTMs) are important for determining the period (tau) of the rhythms (tau refers to the period of a rhythm and is the length, in time, of one complete cycle). A diurnal rhythm is synchronized with the day/night cycle, while the ultradian and infradian rhythms have a period shorter and longer than 24 hours, respectively. Disruptions in the circadian rhythms contribute to the pathology of cardiovascular diseases, cancer, metabolic syndromes and aging. A transcription/translation feedback loop (TTFL) forms the core of the molecular circadian clock mechanism. Transcription factors, CLOCK or NPAS2 and BMAL1 or BMAL2, form the positive limb of the feedback loop, act in the form of a heterodimer and activate the transcription of core clock genes and clock-controlled genes (involved in key metabolic processes), harboring E-box elements (5'-CACGTG-3') within their promoters. The core clock genes: PER1/2/3 and CRY1/2 which are transcriptional repressors form the negative limb of the feedback loop and interact with the CLOCK|NPAS2-BMAL1|BMAL2 heterodimer inhibiting its activity and thereby negatively regulating their own expression. This heterodimer also activates nuclear receptors NR1D1, NR1D2, RORA, RORB and RORG, which form a second feedback loop and which activate and repress BMAL1 transcription, respectively. Has a redundant role with the other PER proteins PER1 and PER2 and is not essential for the circadian rhythms maintenance. In contrast, plays an important role in sleep-wake timing and sleep homeostasis probably through the transcriptional regulation of sleep homeostasis-related genes, without influencing circadian parameters. Can bind heme. This Homo sapiens (Human) protein is Period circadian protein homolog 3 (PER3).